Reading from the N-terminus, the 699-residue chain is Elongation factor G (699 aa).

The region spanning 8–288 (EDYRNFGIMA…AVVDYLPSPM (281 aa)) is the tr-type G domain. GTP is bound by residues 17–24 (AHIDAGKT), 86–90 (DTPGH), and 140–143 (NKMD).

The protein belongs to the TRAFAC class translation factor GTPase superfamily. Classic translation factor GTPase family. EF-G/EF-2 subfamily.

The protein localises to the cytoplasm. In terms of biological role, catalyzes the GTP-dependent ribosomal translocation step during translation elongation. During this step, the ribosome changes from the pre-translocational (PRE) to the post-translocational (POST) state as the newly formed A-site-bound peptidyl-tRNA and P-site-bound deacylated tRNA move to the P and E sites, respectively. Catalyzes the coordinated movement of the two tRNA molecules, the mRNA and conformational changes in the ribosome. The chain is Elongation factor G from Rhizobium leguminosarum bv. trifolii (strain WSM2304).